The following is a 1046-amino-acid chain: UDP-N-acetylglucosamine--peptide N-acetylglucosaminyltransferase 110 kDa subunit (1046 aa).

Ala2 bears the N-acetylalanine mark. Phosphoserine; by GSK3-beta; alternate occurs at positions 3 and 4. O-linked (GlcNAc) serine; alternate glycans are attached at residues Ser3 and Ser4. Phosphoserine is present on Ser20. TPR repeat units lie at residues 21–54, 89–122, 123–156, 157–190, 191–224, 225–258, 259–292, 293–326, 327–360, 361–394, 395–428, and 429–462; these read FQGL…EPDN, AEAY…KPDF, IDGY…NPDL, YCVR…QPNF, AVAW…DPNF, LDAY…SPNH, AVVH…QPHF, PDAY…CPTH, ADSL…FPEF, AAAH…SPTF, ADAY…NPAF, and ADAH…KPDF. Ser399 carries O-linked (GlcNAc) serine; by autocatalysis glycosylation. Phosphothreonine is present on Thr454. A TPR 13; truncated repeat occupies 463–473; the sequence is PDAYCNLAHCL. Residues 464-466 carry the DFP motif motif; it reads DAY. The Nuclear localization signal motif lies at 487-503; that stretch reads KKLVSIVAEQLEKNRLP. The active-site Proton acceptor is the His508. Residues Gln849, Lys852, 906 to 908, 911 to 914, 930 to 932, and Asp935 each bind UDP; these read APK, HVRR, and HTT. Tyr989 is subject to Phosphotyrosine. A required for phosphatidylinositol 3,4,5-triphosphate binding region spans residues 991–1010; that stretch reads KKIRGKVWKQRISSPLFNTK.

Belongs to the glycosyltransferase 41 family. O-GlcNAc transferase subfamily. In terms of assembly, monomer; may exist in different oligomerization states in cells. Homotrimer, oligomerizes via TPR repeats 6 and 7. Trimerization is not necessary for activity in vitro, however it increases affinity for UDP-GlcNAc. Component of a THAP1/THAP3-HCFC1-OGT complex. Component of the NSL complex at least composed of MOF/KAT8, KANSL1, KANSL2, KANSL3, MCRS1, PHF20, OGT1/OGT, WDR5 and HCFC1. Found in a complex with KIF5B, RHOT1, RHOT2 and TRAK1. Found in a complex composed of at least SINHCAF, SIN3A, HDAC1, SAP30, RBBP4, OGT and TET1. Component of a complex composed of KMT2E/MLL5, OGT and USP7; the complex stabilizes KMT2E/MLL5, preventing KMT2E/MLL5 ubiquitination and proteasomal-mediated degradation. Interacts (via TPRs 1-6) with SIN3A; the interaction mediates transcriptional repression in parallel with histone deacetylase. Interacts (via TPR 5-6) with TET1, TET2 and TET3. Interacts (via TPR repeats 6 and 7) with ATXN10. Interacts with NSD2. Interacts with PROSER1; this interaction mediates TET2 O-GlcNAcylation and stability by promoting the interaction between OGT and TET2. Post-translationally, ubiquitinated by the SCF(FBXO31) complex, leading to its proteasomal degradation. Phosphorylation on Ser-3 or Ser-4 by GSK3-beta positively regulates its activity. Phosphorylation at Thr-454 by AMPK promotes nuclear localization. In terms of processing, glycosylated via autocatalysis; O-GlcNAcylation at Ser-399 promotes nuclear localization.

The protein resides in the cytoplasm. It is found in the nucleus. The protein localises to the cell membrane. Its subcellular location is the mitochondrion membrane. It localises to the cell projection. The enzyme catalyses L-seryl-[protein] + UDP-N-acetyl-alpha-D-glucosamine = 3-O-(N-acetyl-beta-D-glucosaminyl)-L-seryl-[protein] + UDP + H(+). It carries out the reaction L-threonyl-[protein] + UDP-N-acetyl-alpha-D-glucosamine = 3-O-(N-acetyl-beta-D-glucosaminyl)-L-threonyl-[protein] + UDP + H(+). The protein operates within protein modification; protein glycosylation. With respect to regulation, subject to product inhibition by UDP. Its function is as follows. Catalyzes the transfer of a single N-acetylglucosamine from UDP-GlcNAc to a serine or threonine residue in cytoplasmic and nuclear proteins resulting in their modification with a beta-linked N-acetylglucosamine (O-GlcNAc). Glycosylates a large and diverse number of proteins including histone H2B, AKT1, AMPK, ATG4B, CAPRIN1, EZH2, FNIP1, GSDMD, KRT7, LMNA, LMNB1, LMNB2, RPTOR, HOXA1, PFKL, KMT2E/MLL5, MAPT/TAU, TET2, RBL2, RET, NOD2 and HCFC1. Can regulate their cellular processes via cross-talk between glycosylation and phosphorylation or by affecting proteolytic processing. Involved in insulin resistance in muscle and adipocyte cells via glycosylating insulin signaling components and inhibiting the 'Thr-308' phosphorylation of AKT1, enhancing IRS1 phosphorylation and attenuating insulin signaling. Involved in glycolysis regulation by mediating glycosylation of 6-phosphofructokinase PFKL, inhibiting its activity. Plays a key role in chromatin structure by mediating O-GlcNAcylation of 'Ser-112' of histone H2B: recruited to CpG-rich transcription start sites of active genes via its interaction with TET proteins (TET1, TET2 or TET3). As part of the NSL complex indirectly involved in acetylation of nucleosomal histone H4 on several lysine residues. O-GlcNAcylation of 'Ser-75' of EZH2 increases its stability, and facilitating the formation of H3K27me3 by the PRC2/EED-EZH2 complex. Stabilizes KMT2E/MLL5 by mediating its glycosylation, thereby preventing KMT2E/MLL5 ubiquitination. Regulates circadian oscillation of the clock genes and glucose homeostasis in the liver. Stabilizes clock proteins BMAL1 and CLOCK through O-glycosylation, which prevents their ubiquitination and subsequent degradation. Promotes the CLOCK-BMAL1-mediated transcription of genes in the negative loop of the circadian clock such as PER1/2 and CRY1/2. O-glycosylates HCFC1 and regulates its proteolytic processing and transcriptional activity. Component of a THAP1/THAP3-HCFC1-OGT complex that is required for the regulation of the transcriptional activity of RRM1. Regulates mitochondrial motility in neurons by mediating glycosylation of TRAK1. Promotes autophagy by mediating O-glycosylation of ATG4B. Acts as a regulator of mTORC1 signaling by mediating O-glycosylation of RPTOR and FNIP1: O-GlcNAcylation of RPTOR in response to glucose sufficiency promotes activation of the mTORC1 complex. The protein is UDP-N-acetylglucosamine--peptide N-acetylglucosaminyltransferase 110 kDa subunit (Ogt) of Mus musculus (Mouse).